A 659-amino-acid polypeptide reads, in one-letter code: ATP-binding cassette sub-family D member 3 (659 aa).

Residues 1–61 (MAAFSKYLTA…GKKERAVVDK (61 aa)) are interaction with PEX19. A glycan (N-linked (GlcNAc...) asparagine) is linked at Asn-12. Lys-61 is subject to N6-acetyllysine. The chain crosses the membrane as a helical span at residues 84-104 (GYLVLIAVMLVSRTYCDVWMI). The ABC transmembrane type-1 domain occupies 85–372 (YLVLIAVMLV…MLLRMSQALG (288 aa)). An N-linked (GlcNAc...) asparagine glycan is attached at Asn-106. Residues 126-146 (LLNFIAAMPLISLVNNFLKYG) traverse the membrane as a helical segment. Asn-206 carries N-linked (GlcNAc...) asparagine glycosylation. A helical membrane pass occupies residues 224 to 244 (AIGAQGPASMMAYLVVSGLFL). Lys-260 carries the N6-acetyllysine modification. A helical transmembrane segment spans residues 313-333 (MGFIDSIIAKYLATVVGYLVV). Position 399 is an N6-acetyllysine (Lys-399). One can recognise an ABC transporter domain in the interval 440-659 (IKFDHVPLAT…ITEDTVEFGS (220 aa)). Residue 473–480 (GPNGCGKS) coordinates ATP. Lys-533 is modified (N6-acetyllysine). The residue at position 659 (Ser-659) is a Phosphoserine.

Belongs to the ABC transporter superfamily. ABCD family. Peroxisomal fatty acyl CoA transporter (TC 3.A.1.203) subfamily. Homodimers. Can form heterodimers with ABCD1 and ABCD2. Dimerization is necessary to form an active transporter. Interacts with PEX19; mediates the targeting of ABCD3 to peroxisomes. Post-translationally, ubiquitinated by PEX2 during pexophagy in response to starvation, leading to its degradation.

The protein resides in the peroxisome membrane. It catalyses the reaction a very long-chain fatty acyl-CoA + H2O = a very long-chain fatty acid + CoA + H(+). The catalysed reaction is a very long-chain fatty acid(in) + ATP + H2O = a very long-chain fatty acid(out) + ADP + phosphate + H(+). It carries out the reaction a long-chain fatty acyl-CoA + H2O = a long-chain fatty acid + CoA + H(+). The enzyme catalyses a long-chain fatty acid(in) + ATP + H2O = a long-chain fatty acid(out) + ADP + phosphate + H(+). It catalyses the reaction pristanoyl-CoA + H2O = 2,6,10,14-tetramethylpentadecanoate + CoA + H(+). The catalysed reaction is 2,6,10,14-tetramethylpentadecanoate(in) + ATP + H2O = 2,6,10,14-tetramethylpentadecanoate(out) + ADP + phosphate + H(+). It carries out the reaction hexadecanedioyl-CoA + H2O = hexadecanedioate + CoA + H(+). The enzyme catalyses hexadecanedioate(in) + ATP + H2O = hexadecanedioate(out) + ADP + phosphate + H(+). It catalyses the reaction (5Z,8Z,11Z,14Z,17Z)-eicosapentaenoyl-CoA + H2O = (5Z,8Z,11Z,14Z,17Z)-eicosapentaenoate + CoA + H(+). The catalysed reaction is (5Z,8Z,11Z,14Z,17Z)-eicosapentaenoate(in) + ATP + H2O = (5Z,8Z,11Z,14Z,17Z)-eicosapentaenoate(out) + ADP + phosphate + H(+). It carries out the reaction (4Z,7Z,10Z,13Z,16Z,19Z)-docosahexaenoyl-CoA + H2O = (4Z,7Z,10Z,13Z,16Z,19Z)-docosahexaenoate + CoA + H(+). The enzyme catalyses (4Z,7Z,10Z,13Z,16Z,19Z)-docosahexaenoate(in) + ATP + H2O = (4Z,7Z,10Z,13Z,16Z,19Z)-docosahexaenoate(out) + ADP + phosphate + H(+). Its function is as follows. Broad substrate specificity ATP-dependent transporter of the ATP-binding cassette (ABC) family that catalyzes the transport of long-chain fatty acids (LCFA)-CoA, dicarboxylic acids-CoA, long-branched-chain fatty acids-CoA and bile acids from the cytosol to the peroxisome lumen for beta-oxydation. Has fatty acyl-CoA thioesterase and ATPase activities. Probably hydrolyzes fatty acyl-CoAs into free fatty acids prior to their ATP-dependent transport into peroxisomes. Thus, play a role in regulation of LCFAs and energy metabolism namely, in the degradation and biosynthesis of fatty acids by beta-oxidation. This Homo sapiens (Human) protein is ATP-binding cassette sub-family D member 3.